The following is a 331-amino-acid chain: Type 2 lactosamine alpha-2,3-sialyltransferase (331 aa).

The Cytoplasmic portion of the chain corresponds to 1–4 (MRGY). Residues 5 to 25 (LVAIFLSAVFLYYVLHCILWG) traverse the membrane as a helical; Signal-anchor for type II membrane protein segment. The Lumenal portion of the chain corresponds to 26-331 (TNVYWAAPVE…KNLVINLTQD (306 aa)). N-linked (GlcNAc...) asparagine glycosylation is found at Asn-129, Asn-181, Asn-282, Asn-295, Asn-308, and Asn-327.

Belongs to the glycosyltransferase 29 family.

It localises to the golgi apparatus membrane. The catalysed reaction is a neolactoside nLc4Cer(d18:1(4E)) + CMP-N-acetyl-beta-neuraminate = a neolactoside IV(3)-alpha-NeuAc-nLc4Cer(d18:1(4E)) + CMP + H(+). The enzyme catalyses a beta-D-galactosyl-(1-&gt;4)-N-acetyl-beta-D-glucosaminyl derivative + CMP-N-acetyl-beta-neuraminate = an N-acetyl-alpha-neuraminyl-(2-&gt;3)-beta-D-galactosyl-(1-&gt;4)-N-acetyl-beta-D-glucosaminyl derivative + CMP + H(+). It carries out the reaction a neolactoside nLc6Cer(d18:1(4E)) + CMP-N-acetyl-beta-neuraminate = a neolactoside VI(3)-alpha-NeuNAc-nLc6Cer(d18:1(4E)) + CMP + H(+). Its function is as follows. Transfers the sialyl residue from CMP-N-acetyl-beta-neuraminate to the terminal galactose residue on sugar chains of glycoproteins and glycolipids. It's alpha-2,3-sialyltransferase activity is specific toward type II glycan chains (Galbeta1-4GlcNAc) on glycoproteins and glycolipids such as neolactosides nLc4Cer and nLc6Cer, whose sialyl-products serve as precursors for the Lewis X antigen. Critically involved in the synthesis of functional selectin ligands needed for neutrophil recruitment during inflammation and lymphocyte homing to the lymph nodes. This chain is Type 2 lactosamine alpha-2,3-sialyltransferase (ST3GAL6), found in Pongo abelii (Sumatran orangutan).